The chain runs to 331 residues: Tryptophan--tRNA ligase (331 aa).

ATP is bound by residues 10–12 (QPS) and 18–19 (GN). A 'HIGH' region motif is present at residues 11–19 (PSGQLTLGN). Asp133 contacts L-tryptophan. Residues 145–147 (GED), Val184, and 193–197 (KMSKS) each bind ATP. The short motif at 193–197 (KMSKS) is the 'KMSKS' region element.

This sequence belongs to the class-I aminoacyl-tRNA synthetase family. As to quaternary structure, homodimer.

Its subcellular location is the cytoplasm. The enzyme catalyses tRNA(Trp) + L-tryptophan + ATP = L-tryptophyl-tRNA(Trp) + AMP + diphosphate + H(+). In terms of biological role, catalyzes the attachment of tryptophan to tRNA(Trp). The chain is Tryptophan--tRNA ligase from Listeria monocytogenes serotype 4b (strain F2365).